The following is a 189-amino-acid chain: Blue copper protein (189 aa).

An N-terminal signal peptide occupies residues 1-24 (MAFSNALVLCFLLAIINMALPSLA). Residues 25–124 (TVYTVGDTSG…GMKLSIKVKA (100 aa)) form the Phytocyanin domain. The Cu cation site is built by histidine 65, cysteine 106, and histidine 111. Cysteine 78 and cysteine 106 are disulfide-bonded. Residues 127 to 160 (GSSAAPSATPSSSGKGSPSSDDTPAATTTTTTPT) are compositionally biased toward low complexity. The tract at residues 127–165 (GSSAAPSATPSSSGKGSPSSDDTPAATTTTTTPTKQNES) is disordered. N-linked (GlcNAc...) asparagine glycosylation is present at asparagine 163.

The sequence is that of Blue copper protein from Pisum sativum (Garden pea).